A 405-amino-acid chain; its full sequence is 5-azacytidine-induced protein 2 (405 aa).

The tract at residues 1-198 (MDTLVEDDIC…TELQKARQTG (198 aa)) is homodimerization. Positions 40–197 (ALVTAYEDIK…RTELQKARQT (158 aa)) form a coiled coil. The segment at 229–270 (SDNMQHAYWELKREMSNLHLVTQVQAELLRKLKTSAAVKKAC) is interaction with TBK1 and IKBKE. Residues serine 331 and serine 366 each carry the phosphoserine modification. A disordered region spans residues 357–377 (LEDNSWVFPSPPKSSETAFGE).

Homodimer. Interacts with IKBKE and TBK1. Interacts with TICAM1. Interacts with TAX1BP1. Interacts with CALCOCO2. Post-translationally, ubiquitinated via 'Lys-48'-linked polyubiquitination by TRIM38, leading to its degradation. In terms of tissue distribution, testis, ovary, heart, lung, kidney and brain. Expressed mainly in the spermatocytes or spermatids in the testis.

Its subcellular location is the cytoplasm. Adapter protein which binds TBK1 and IKBKE playing a role in antiviral innate immunity. Activates serine/threonine-protein kinase TBK1 and facilitates its oligomerization. Enhances the phosphorylation of NF-kappa-B p65 subunit RELA by TBK1. Promotes TBK1-induced as well as TNF-alpha or PMA-induced activation of NF-kappa-B. Participates in IFNB promoter activation via TICAM1. The protein is 5-azacytidine-induced protein 2 (Azi2) of Mus musculus (Mouse).